The chain runs to 1032 residues: Phosphoenolpyruvate carboxylase 4 (1032 aa).

The active site involves His-154. A disordered region spans residues 377 to 407 (PNLQKQNEQDFSESDWEKIDNGSRSGLTSRG). Positions 398–407 (GSRSGLTSRG) are enriched in polar residues. Lys-699 is a catalytic residue.

Belongs to the PEPCase type 1 family. Homotetramer. Mg(2+) serves as cofactor. As to expression, expressed at low levels in flowers and siliques, and detectable in roots.

Its subcellular location is the cytoplasm. The enzyme catalyses oxaloacetate + phosphate = phosphoenolpyruvate + hydrogencarbonate. Its function is as follows. Through the carboxylation of phosphoenolpyruvate (PEP) it forms oxaloacetate, a four-carbon dicarboxylic acid source for the tricarboxylic acid cycle. This is Phosphoenolpyruvate carboxylase 4 (PPC4) from Arabidopsis thaliana (Mouse-ear cress).